Consider the following 1485-residue polypeptide: Glutamate receptor ionotropic, NMDA 2B (1485 aa).

An N-terminal signal peptide occupies residues methionine 1 to alanine 26. The Extracellular segment spans residues arginine 27–aspartate 557. An N-linked (GlcNAc...) asparagine glycan is attached at asparagine 74. Cysteine 86 and cysteine 321 are oxidised to a cystine. Histidine 127 and glutamate 284 together coordinate Zn(2+). N-linked (GlcNAc...) asparagine glycans are attached at residues asparagine 341, asparagine 348, asparagine 444, and asparagine 491. Intrachain disulfides connect cysteine 429–cysteine 456 and cysteine 436–cysteine 457. Residues threonine 514 and arginine 519 each coordinate L-glutamate. A glycan (N-linked (GlcNAc...) asparagine) is linked at asparagine 542. The chain crosses the membrane as a helical span at residues valine 558–valine 576. At phenylalanine 577–glycine 603 the chain is on the cytoplasmic side. Residues lysine 604–proline 623 constitute an intramembrane region (discontinuously helical). The segment at lysine 604–proline 623 is pore-forming. The Cytoplasmic portion of the chain corresponds to lysine 624 to isoleucine 630. Residues methionine 631–tyrosine 646 form a helical membrane-spanning segment. The Extracellular portion of the chain corresponds to threonine 647–asparagine 817. N-linked (GlcNAc...) asparagine glycosylation is present at asparagine 688. Residues serine 690–threonine 691 and aspartate 732 each bind L-glutamate. Cysteine 746 and cysteine 801 are joined by a disulfide. Residues methionine 818 to isoleucine 837 traverse the membrane as a helical segment. Topologically, residues cysteine 838–valine 1485 are cytoplasmic. Phosphoserine occurs at positions 882, 886, 917, and 920. Residues tyrosine 962 and tyrosine 1039 each carry the phosphotyrosine modification. 3 positions are modified to phosphoserine: serine 1058, serine 1061, and serine 1064. The tract at residues glutamate 1074–lysine 1097 is disordered. Phosphotyrosine occurs at positions 1109 and 1133. Serine 1143 is modified (phosphoserine). A Phosphotyrosine modification is found at tyrosine 1155. The tract at residues phenylalanine 1162–proline 1194 is disordered. Phosphoserine is present on residues serine 1255 and serine 1259. The span at proline 1269–serine 1278 shows a compositional bias: low complexity. The segment at proline 1269 to histidine 1302 is disordered. A compositionally biased stretch (polar residues) spans lysine 1280–lysine 1289. A compositionally biased stretch (basic residues) spans alanine 1290 to glutamine 1301. The segment at lysine 1292 to tyrosine 1304 is interaction with DAPK1. The residue at position 1303 (serine 1303) is a Phosphoserine; by DAPK1. Position 1475 is a phosphotyrosine (tyrosine 1475). Positions serine 1483–valine 1485 match the PDZ-binding motif.

It belongs to the glutamate-gated ion channel (TC 1.A.10.1) family. NR2B/GRIN2B subfamily. Heterotetramer. Forms heterotetrameric channels composed of two GluN1/zeta subunits (GRIN1), and two identical GluN2/epsilon subunits (GRIN2A, GRIN2B, GRIN2C or GRIN2D) or GluN3 subunits (GRIN3A or GRIN3B) (in vitro). Can also form heterotetrameric channels that contain at least two GluN1 subunits and at least two different GluN2 subunits (or a combination of one GluN2 and one GluN3 subunits) (in vitro). In vivo, the subunit composition may depend on the expression levels of the different subunits. Found in a complex with GRIN1, GRIN3A and PPP2CB. Found in a complex with GRIN1 and GRIN3B. Interacts with MAGI3. Interacts with HIP1 and Neto1. Interacts with PDZ domains of PATJ, DLG3 and DLG4. Interacts with DAPK1. Found in a complex with GRIN1 and PRR7. Interacts with PRR7. Interacts with CAMK2A. Interacts with ARC; preventing ARC oligomerization. Interacts with TMEM25. Interacts (via the extreme C-terminus) with FRMPD2 (via the second PDZ domain); the interaction is direct and is likely to promote NMDAR-mediated neural signal transmission. Interacts with FAM81A; the interaction facilitates condensate formation via liquid-liquid phase separation. In terms of processing, phosphorylated on tyrosine residues. Phosphorylation at Ser-1303 by DAPK1 enhances synaptic NMDA receptor channel activity.

The protein localises to the cell membrane. Its subcellular location is the postsynaptic cell membrane. It is found in the cell projection. The protein resides in the dendrite. It localises to the late endosome. The protein localises to the lysosome. Its subcellular location is the cytoplasm. It is found in the cytoskeleton. The enzyme catalyses Ca(2+)(in) = Ca(2+)(out). It catalyses the reaction Na(+)(in) = Na(+)(out). The catalysed reaction is K(+)(in) = K(+)(out). In terms of biological role, component of N-methyl-D-aspartate (NMDA) receptors (NMDARs) that function as heterotetrameric, ligand-gated cation channels with high calcium permeability and voltage-dependent block by Mg(2+). Participates in synaptic plasticity for learning and memory formation by contributing to the long-term depression (LTD) of hippocampus membrane currents. Channel activation requires binding of the neurotransmitter L-glutamate to the GluN2 subunit, glycine or D-serine binding to the GluN1 subunit, plus membrane depolarization to eliminate channel inhibition by Mg(2+). NMDARs mediate simultaneously the potasium efflux and the influx of calcium and sodium. Each GluN2 subunit confers differential attributes to channel properties, including activation, deactivation and desensitization kinetics, pH sensitivity, Ca2(+) permeability, and binding to allosteric modulators. In concert with DAPK1 at extrasynaptic sites, acts as a central mediator for stroke damage. Its phosphorylation at Ser-1303 by DAPK1 enhances synaptic NMDA receptor channel activity inducing injurious Ca2+ influx through them, resulting in an irreversible neuronal death. In Canis lupus familiaris (Dog), this protein is Glutamate receptor ionotropic, NMDA 2B.